The chain runs to 274 residues: NAD kinase (274 aa).

The active-site Proton acceptor is Asp-60. NAD(+)-binding positions include 60–61 (DG), Lys-65, 127–128 (NE), and Arg-152.

It belongs to the NAD kinase family. A divalent metal cation serves as cofactor.

Its subcellular location is the cytoplasm. The catalysed reaction is NAD(+) + ATP = ADP + NADP(+) + H(+). Its function is as follows. Involved in the regulation of the intracellular balance of NAD and NADP, and is a key enzyme in the biosynthesis of NADP. Catalyzes specifically the phosphorylation on 2'-hydroxyl of the adenosine moiety of NAD to yield NADP. In Mycoplasmoides gallisepticum (strain R(low / passage 15 / clone 2)) (Mycoplasma gallisepticum), this protein is NAD kinase.